Here is a 376-residue protein sequence, read N- to C-terminus: Respiration factor 1 (376 aa).

Disordered stretches follow at residues 1-23 (MKDLNPEMGKFATTKGPPQDNRG), 88-107 (VNVTHDESLPLGTIESNSTK), 258-279 (FKEKKKKKKGDVNGNHPETGSS), and 347-376 (GVNELEHNSSNLNNSNSGTPHNHNQNQHTN). Residues 354–376 (NSSNLNNSNSGTPHNHNQNQHTN) are compositionally biased toward low complexity.

Its subcellular location is the cytoplasm. It is found in the nucleus. The protein localises to the mitochondrion. Mitochondrial and nuclear transcriptional activator required for respiratory growth. The sequence is that of Respiration factor 1 (RSF1) from Saccharomyces cerevisiae (strain YJM789) (Baker's yeast).